The sequence spans 609 residues: Zinc metalloproteinase/disintegrin-like HR1a (609 aa).

The first 20 residues, 1–20 (MIQVLLVTICLAVFPYQGSS), serve as a signal peptide directing secretion. Positions 21-190 (IILGSGNVND…KKASKLVVTA (170 aa)) are excised as a propeptide. Residues 200–396 (RFIELVIVAD…DEPQCILNEP (197 aa)) form the Peptidase M12B domain. Residues glutamate 203 and aspartate 287 each coordinate Ca(2+). The N-linked (GlcNAc...) asparagine glycan is linked to asparagine 298. Cystine bridges form between cysteine 311–cysteine 391, cysteine 351–cysteine 375, and cysteine 353–cysteine 358. Histidine 336 lines the Zn(2+) pocket. Glutamate 337 is an active-site residue. The Zn(2+) site is built by histidine 340 and histidine 346. Asparagine 350 carries an N-linked (GlcNAc...) asparagine glycan. An N-linked (GlcNAc...) asparagine glycan is attached at asparagine 374. Residues cysteine 391 and asparagine 394 each coordinate Ca(2+). Positions 397-400 (LRTD) are excised as a propeptide. Residues 404 to 490 (PPVCGNELLE…DCPTDRFHRN (87 aa)) form the Disintegrin domain. Residues valine 406, asparagine 409, leucine 411, glutamate 413, glutamate 416, and aspartate 419 each contribute to the Ca(2+) site. 22 disulfides stabilise this stretch: cysteine 407-cysteine 426, cysteine 407-cysteine 436, cysteine 418-cysteine 431, cysteine 418-cysteine 436, cysteine 420-cysteine 426, cysteine 430-cysteine 453, cysteine 444-cysteine 450, cysteine 449-cysteine 475, cysteine 462-cysteine 482, cysteine 469-cysteine 494, cysteine 469-cysteine 501, cysteine 494-cysteine 506, cysteine 501-cysteine 506, cysteine 513-cysteine 528, cysteine 513-cysteine 563, cysteine 528-cysteine 571, cysteine 541-cysteine 551, cysteine 551-cysteine 558, cysteine 558-cysteine 597, cysteine 563-cysteine 571, cysteine 591-cysteine 602, and cysteine 597-cysteine 602. The D/ECD-tripeptide signature appears at 468–470 (ECD). Residues aspartate 470, glutamate 473, and aspartate 485 each contribute to the Ca(2+) site. Asparagine 520 carries an N-linked (GlcNAc...) asparagine glycan.

This sequence belongs to the venom metalloproteinase (M12B) family. P-III subfamily. P-IIIb sub-subfamily. In terms of assembly, monomer. The cofactor is Zn(2+). In terms of tissue distribution, expressed by the venom gland.

The protein localises to the secreted. Functionally, zinc protease that induces hemorrhage and has proteolytic activity. Has preference for Ala, His, Pro, Met, and Tyr at the P1 position, in descending order (in vitro). Predominantly prefers Val and Asp at the P3 and P2 positions, respectively. Its function is as follows. Inhibits platelet aggregation induced by ADP, thrombin, platelet-activating factor and collagen. Acts by inhibiting fibrinogen interaction with platelet receptors alpha-IIb/beta-3 (ITGA2B/ITGB3). This Protobothrops flavoviridis (Habu) protein is Zinc metalloproteinase/disintegrin-like HR1a.